The chain runs to 384 residues: H-2 class I histocompatibility antigen, TLA(B) alpha chain (384 aa).

The N-terminal stretch at 1–26 (MRMGTPVPGTLLILLAASQGQTQTCP) is a signal peptide. The alpha-1 stretch occupies residues 27–116 (GSHSLRYFYT…MLDYYNLSQN (90 aa)). The Extracellular segment spans residues 27-314 (GSHSLRYFYT…TSMPNRTTVR (288 aa)). N-linked (GlcNAc...) asparagine glycans are attached at residues asparagine 63, asparagine 112, and asparagine 116. The alpha-2 stretch occupies residues 117-208 (GSHTIQVMYG…ENRKKTQECT (92 aa)). Disulfide bonds link cysteine 127-cysteine 190 and cysteine 229-cysteine 285. The tract at residues 209–300 (DPPKTHVTHH…GLPEPLTLRW (92 aa)) is alpha-3. The Ig-like C1-type domain occupies 211–299 (PKTHVTHHPR…EGLPEPLTLR (89 aa)). The connecting peptide stretch occupies residues 301–314 (EPPQTSMPNRTTVR). A glycan (N-linked (GlcNAc...) asparagine) is linked at asparagine 309. The chain crosses the membrane as a helical span at residues 315–334 (ALLGAMIILGFMSGSVMMWM). Over 335–384 (RKNNGGNGDDNTAAYQNEREHLSLDPRAESEALGVEAGMKDLPSAPPLVS) the chain is Cytoplasmic. The span at 354-364 (EHLSLDPRAES) shows a compositional bias: basic and acidic residues. Residues 354–384 (EHLSLDPRAESEALGVEAGMKDLPSAPPLVS) form a disordered region.

This sequence belongs to the MHC class I family. As to quaternary structure, heterodimer of an alpha chain and a beta chain (beta-2-microglobulin). In terms of tissue distribution, TL antigens are only expressed on thymocytes, activated T-lymphocytes and on some thymic leukemias.

The protein localises to the membrane. Functionally, involved in the presentation of foreign antigens to the immune system. The polypeptide is H-2 class I histocompatibility antigen, TLA(B) alpha chain (H2-T3) (Mus musculus (Mouse)).